We begin with the raw amino-acid sequence, 598 residues long: Aluminum-activated malate transporter 9 (598 aa).

6 helical membrane-spanning segments follow: residues 88–108 (IVFS…IFYQ), 117–137 (YSVW…GATL), 144–164 (ALGT…STLF), 170–190 (IFCT…KLYP), 194–214 (AYEY…ISGF), and 227–247 (FLLI…IYPI).

This sequence belongs to the aromatic acid exporter (TC 2.A.85) family. Expressed in hypocotyls, leaves, roots, flowers, sepals and stamina. In leaves, expressed almost exclusively in mesophyll cells.

The protein localises to the vacuole membrane. With respect to regulation, slow activation by external aluminum. In terms of biological role, vacuolar malate channel. Has a higher selectivity for malate than for fumarate. Also exhibits a weak chloride conductance. This chain is Aluminum-activated malate transporter 9 (ALMT9), found in Arabidopsis thaliana (Mouse-ear cress).